A 120-amino-acid chain; its full sequence is uncharacterized protein (120 aa).

The next 3 helical transmembrane spans lie at 20–39 (FFWP…CYLL), 52–71 (GSSL…LFSI), and 86–108 (ILVV…SIIG).

The protein localises to the cell membrane. This is an uncharacterized protein from Pasteurella multocida (strain Pm70).